An 82-amino-acid chain; its full sequence is U7-hexatoxin-Mg1a (82 aa).

The first 26 residues, 1–26, serve as a signal peptide directing secretion; sequence MRTIVFLIVSILLLSSAVLMLAEGNA. Residues 27–44 constitute a propeptide that is removed on maturation; sequence ASHELQEYPIEESLEEQR. 4 disulfides stabilise this stretch: Cys-46–Cys-62, Cys-51–Cys-67, Cys-61–Cys-77, and Cys-69–Cys-75. An Arginine amide modification is found at Arg-80.

It belongs to the rTX family. In terms of tissue distribution, expressed by the venom gland.

The protein localises to the secreted. Its function is as follows. Induces flaccid paralysis when injected into lepidopteran larvae. Intracranial injection into mice causes awkwardness of movement and laboured respiration until death. In Macrothele gigas (Japanese funnel web spider), this protein is U7-hexatoxin-Mg1a.